Reading from the N-terminus, the 130-residue chain is Protein LLP homolog (130 aa).

A compositionally biased stretch (basic residues) spans 1–21; it reads MAKSLRSKWKRKMRAEKRKKN. Disordered regions lie at residues 1–23 and 57–76; these read MAKS…KNAP and QEKM…EKDD. Positions 10–78 form a coiled coil; that stretch reads KRKMRAEKRK…GADEEKDDMK (69 aa). K78 participates in a covalent cross-link: Glycyl lysine isopeptide (Lys-Gly) (interchain with G-Cter in SUMO2). The span at 104–124 shows a compositional bias: basic residues; sequence RQRKRLKAKREKKRGKSRAKA. Residues 104 to 130 form a disordered region; it reads RQRKRLKAKREKKRGKSRAKAAKGLAW.

This sequence belongs to the learning-associated protein family. In terms of assembly, interacts with CTCF, MYO1C and with the transcriptional machinery, including RNA polymerase II and TBP. As to expression, widely expressed, with high levels in testis and spleen and low levels in heart. In the brain, expressed in the cortex and hippocampus, and at very low levels in the cerebellum.

Its subcellular location is the nucleus. It localises to the nucleolus. It is found in the chromosome. Its function is as follows. In hippocampal neurons, regulates dendritic and spine growth and synaptic transmission. The chain is Protein LLP homolog (Llph) from Mus musculus (Mouse).